The following is a 382-amino-acid chain: RIB43A-like with coiled-coils protein 2 (382 aa).

Residues 222-255 adopt a coiled-coil conformation; sequence NKSQAIESVERKKQEKKQEQEDNLAEITNLLRGD.

The protein belongs to the RIB43A family. Microtubule inner protein component of sperm flagellar doublet microtubules. In terms of tissue distribution, expressed in airway epithelial cells.

The protein resides in the cytoplasm. It is found in the cytoskeleton. It localises to the cilium axoneme. Its subcellular location is the flagellum axoneme. Functionally, microtubule inner protein (MIP) part of the dynein-decorated doublet microtubules (DMTs) in cilia axoneme, which is required for motile cilia beating. The sequence is that of RIB43A-like with coiled-coils protein 2 from Homo sapiens (Human).